A 145-amino-acid polypeptide reads, in one-letter code: Large ribosomal subunit protein bL35c (145 aa).

Residues 1–56 constitute a chloroplast transit peptide; that stretch reads MASLSMASVNVSFCHPLRSSSPKVSLRSSVHFATSLSSSHSISGLRAVLPLKISTV.

It belongs to the bacterial ribosomal protein bL35 family. In terms of assembly, part of the 50S ribosomal subunit.

Its subcellular location is the plastid. It is found in the chloroplast. The polypeptide is Large ribosomal subunit protein bL35c (Arabidopsis thaliana (Mouse-ear cress)).